A 78-amino-acid chain; its full sequence is Large ribosomal subunit protein uL10 (78 aa).

Residues 40–50 are compositionally biased toward low complexity; it reads AAAAAATAPAA. Residues 40–78 are disordered; the sequence is AAAAAATAPAAETKKEEKKEEKKEETEESDDDIGLSLFH. The segment covering 51–64 has biased composition (basic and acidic residues); sequence ETKKEEKKEEKKEE.

It belongs to the universal ribosomal protein uL10 family. P0 forms a pentameric complex by interaction with dimers of P1 and P2.

It localises to the nucleus. It is found in the cytoplasm. Ribosomal protein P0 is the functional equivalent of E.coli protein L10. This is Large ribosomal subunit protein uL10 from Culicoides nubeculosus (Biting midge).